We begin with the raw amino-acid sequence, 432 residues long: Eukaryotic translation initiation factor 3 subunit M (432 aa).

The PCI domain occupies 184-356 (EEEEAYQHIL…KVFLIHSVRY (173 aa)). Composition is skewed to basic and acidic residues over residues 392-401 (AQQEAERKLV) and 423-432 (QHRERNDNDD). Positions 392 to 432 (AQQEAERKLVEASTQHNNDRGNQRRGGNRGQQHRERNDNDD) are disordered.

The protein belongs to the eIF-3 subunit M family. In terms of assembly, component of the eukaryotic translation initiation factor 3 (eIF-3) complex.

Its subcellular location is the cytoplasm. Component of the eukaryotic translation initiation factor 3 (eIF-3) complex, which is involved in protein synthesis of a specialized repertoire of mRNAs and, together with other initiation factors, stimulates binding of mRNA and methionyl-tRNAi to the 40S ribosome. The eIF-3 complex specifically targets and initiates translation of a subset of mRNAs involved in cell proliferation. The chain is Eukaryotic translation initiation factor 3 subunit M from Pyricularia oryzae (strain 70-15 / ATCC MYA-4617 / FGSC 8958) (Rice blast fungus).